We begin with the raw amino-acid sequence, 97 residues long: M-zodatoxin-Lt7a (97 aa).

The signal sequence occupies residues 1 to 22; it reads MKFYVVALALLVAFVCIAESRS. The propeptide occupies 23–63; sequence VETERAVDADLEDDLDDLEEYLEGIAEALELEDFPDTEEAR. Residues 60-63 carry the Processing quadruplet motif motif; it reads EEAR.

Post-translationally, cleavage of the propeptide depends on the processing quadruplet motif (XXXR, with at least one of X being E). As to expression, expressed by the venom gland.

Its subcellular location is the secreted. Its function is as follows. Does not have antimicrobial or antifungal activity. Does not have hemolytic activity against rabbit erythrocytes. However, it causes some conductance changes in planar bilayer membranes, without membrane rupture, suggesting a cytolytic function on other biological targets. It causes paralysis, but is not lethal when injected into insect (M.domestica) larvae. In Lachesana tarabaevi (Spider), this protein is M-zodatoxin-Lt7a.